Here is a 388-residue protein sequence, read N- to C-terminus: 4-hydroxy-3-methylbut-2-en-1-yl diphosphate synthase (flavodoxin) (388 aa).

Residues Cys281, Cys284, Cys316, and Glu323 each contribute to the [4Fe-4S] cluster site.

It belongs to the IspG family. Requires [4Fe-4S] cluster as cofactor.

It catalyses the reaction (2E)-4-hydroxy-3-methylbut-2-enyl diphosphate + oxidized [flavodoxin] + H2O + 2 H(+) = 2-C-methyl-D-erythritol 2,4-cyclic diphosphate + reduced [flavodoxin]. The protein operates within isoprenoid biosynthesis; isopentenyl diphosphate biosynthesis via DXP pathway; isopentenyl diphosphate from 1-deoxy-D-xylulose 5-phosphate: step 5/6. Functionally, converts 2C-methyl-D-erythritol 2,4-cyclodiphosphate (ME-2,4cPP) into 1-hydroxy-2-methyl-2-(E)-butenyl 4-diphosphate. In Pseudarthrobacter chlorophenolicus (strain ATCC 700700 / DSM 12829 / CIP 107037 / JCM 12360 / KCTC 9906 / NCIMB 13794 / A6) (Arthrobacter chlorophenolicus), this protein is 4-hydroxy-3-methylbut-2-en-1-yl diphosphate synthase (flavodoxin).